A 131-amino-acid polypeptide reads, in one-letter code: Global transcriptional regulator Spx (131 aa).

C10 and C13 form a disulfide bridge.

This sequence belongs to the ArsC family. Spx subfamily. As to quaternary structure, interacts with the C-terminal domain of the alpha subunit of the RNAP.

It is found in the cytoplasm. Its function is as follows. Global transcriptional regulator that plays a key role in stress response and exerts either positive or negative regulation of genes. Acts by interacting with the C-terminal domain of the alpha subunit of the RNA polymerase (RNAP). This interaction can enhance binding of RNAP to the promoter region of target genes and stimulate their transcription, or block interaction of RNAP with activator. The chain is Global transcriptional regulator Spx from Staphylococcus saprophyticus subsp. saprophyticus (strain ATCC 15305 / DSM 20229 / NCIMB 8711 / NCTC 7292 / S-41).